A 1534-amino-acid polypeptide reads, in one-letter code: DNA-directed RNA polymerase subunit beta'' (1534 aa).

4 residues coordinate Zn(2+): cysteine 220, cysteine 296, cysteine 303, and cysteine 306. Basic and acidic residues-rich tracts occupy residues 644–668 and 678–688; these read RTQE…RTRE and PENKYRTREGE. 2 disordered regions span residues 644-698 and 719-800; these read RTQE…EDEY and YRTL…KKEG. Acidic residues-rich tracts occupy residues 744–762 and 770–789; these read GEYE…SSED and TLEE…EYGS.

The protein belongs to the RNA polymerase beta' chain family. RpoC2 subfamily. In terms of assembly, in plastids the minimal PEP RNA polymerase catalytic core is composed of four subunits: alpha, beta, beta', and beta''. When a (nuclear-encoded) sigma factor is associated with the core the holoenzyme is formed, which can initiate transcription. Requires Zn(2+) as cofactor.

It localises to the plastid. The protein localises to the chloroplast. The enzyme catalyses RNA(n) + a ribonucleoside 5'-triphosphate = RNA(n+1) + diphosphate. In terms of biological role, DNA-dependent RNA polymerase catalyzes the transcription of DNA into RNA using the four ribonucleoside triphosphates as substrates. The protein is DNA-directed RNA polymerase subunit beta'' of Saccharum officinarum (Sugarcane).